The sequence spans 388 residues: MGLLRLLVLCTLAACCMARSPPAPPLPQRPLSPLHPLGCNDSEVLAVAGFALQNINRDQKDGYMLSLNRVHDVREHYQEDMGSLFYLTLDVLETDCHVLSRKAQKDCKPRMFYESVYGQCKAMFHINKPRRVLYLPAYNCTLRPVSKRKTHTTCPDCPSPIDLSNPSALEAATESLAKFNSKSPSKKYELVKVTKAMNQWVSGPAYYVEYLIKEAPCTKSQASCSLQHSDSEPVGICQGSTVQSSLRHVPLIQPVEKSVTVTCEFFESQAQVPGDENPAVTQGPQKLPQKNTAPTSSPSVTAPRGSIQHLPELDDEKPEESKGGSPEEAFPVQLDLTTNPQGDTLDVSFLYLEPGDKKLVVLPFPGKEQRSAECPGPEKENNPLVLPP.

A signal peptide spans 1–18 (MGLLRLLVLCTLAACCMA). 2 consecutive Cystatin fetuin-B-type domains span residues 28–141 (QRPL…YNCT) and 152–264 (TTCP…VTCE). The N-linked (GlcNAc...) asparagine glycan is linked to asparagine 40. Disulfide bonds link cysteine 96/cysteine 107, cysteine 120/cysteine 140, cysteine 154/cysteine 157, cysteine 217/cysteine 224, and cysteine 237/cysteine 263. A glycan (N-linked (GlcNAc...) asparagine) is linked at asparagine 139. 2 disordered regions span residues 270–343 (AQVP…PQGD) and 367–388 (KEQR…VLPP). Residues 279-300 (AVTQGPQKLPQKNTAPTSSPSV) show a composition bias toward polar residues. O-linked (GalNAc...) threonine glycans are attached at residues threonine 292 and threonine 295. Serine 321 bears the Phosphoserine mark. Basic and acidic residues predominate over residues 367-381 (KEQRSAECPGPEKEN).

This sequence belongs to the fetuin family. As to expression, liver, lung and tongue.

The protein resides in the secreted. Protease inhibitor required for egg fertilization. Required to prevent premature zona pellucida hardening before fertilization, probably by inhibiting the protease activity of ASTL, a protease that mediates the cleavage of ZP2 and triggers zona pellucida hardening. The sequence is that of Fetuin-B (Fetub) from Mus musculus (Mouse).